Reading from the N-terminus, the 159-residue chain is Early E3 18.5 kDa glycoprotein (159 aa).

The N-terminal stretch at 1–17 (MRYMILGLLALAAVCSA) is a signal peptide. The Lumenal segment spans residues 18 to 123 (AKKVEFKEPA…PPQKCLENTG (106 aa)). 2 cysteine pairs are disulfide-bonded: Cys28–Cys45 and Cys39–Cys100. N-linked (GlcNAc...) asparagine; by host glycans are attached at residues Asn29 and Asn78. A helical membrane pass occupies residues 124–144 (TFCSTALLITALALVCTLLYL). Residues 145-159 (KYKSRRSFIDEKKMP) lie on the Cytoplasmic side of the membrane. A Di-lysine motif motif is present at residues 156–159 (KKMP).

It belongs to the adenoviridae E19 family. Post-translationally, both disulfide bonds are absolutely critical for the interaction with MHC antigens. N-glycosylated; high-mannose.

It is found in the host endoplasmic reticulum membrane. Its function is as follows. Binds and retains class I heavy chains in the endoplasmic reticulum during the early period of virus infection, thereby impairing their transport to the cell surface. Also delays the expression of class I alleles that it cannot affect by direct retention. Binds transporters associated with antigen processing (TAP) and acts as a tapasin inhibitor, preventing class I/TAP association. In consequence, infected cells are masked for immune recognition by cytotoxic T-lymphocytes. The protein is Early E3 18.5 kDa glycoprotein of Homo sapiens (Human).